The primary structure comprises 117 residues: Flagellar transcriptional regulator FlhD (117 aa).

The protein belongs to the FlhD family. Homodimer; disulfide-linked. Forms a heterohexamer composed of two FlhC and four FlhD subunits. Each FlhC binds a FlhD dimer, forming a heterotrimer, and a hexamer assembles by dimerization of two heterotrimers.

It localises to the cytoplasm. Functionally, functions in complex with FlhC as a master transcriptional regulator that regulates transcription of several flagellar and non-flagellar operons by binding to their promoter region. Activates expression of class 2 flagellar genes, including fliA, which is a flagellum-specific sigma factor that turns on the class 3 genes. Also regulates genes whose products function in a variety of physiological pathways. This chain is Flagellar transcriptional regulator FlhD, found in Erwinia amylovora (strain CFBP1430).